The sequence spans 501 residues: Aldehyde dehydrogenase 1A1 (501 aa).

Position 2 is an N-acetylserine (serine 2). Residues lysine 91 and lysine 128 each carry the N6-acetyllysine modification. NAD(+) contacts are provided by residues 167–170 (IPWN), 193–196 (KPAE), 226–227 (GP), and 246–247 (GS). N6-acetyllysine is present on lysine 252. Glutamate 269 serves as the catalytic Proton acceptor. 269 to 271 (ELG) is an NAD(+) binding site. The active-site Nucleophile is cysteine 303. Residues 336 to 501 (LNSGINQGPQ…VAIKISQKNS (166 aa)) form a mediates interaction with PRMT3 region. 349–353 (EQHDK) is a binding site for NAD(+). 2 positions are modified to N6-acetyllysine: lysine 353 and lysine 367. An NAD(+)-binding site is contributed by 400–402 (EIF). Lysine 410 carries the N6-acetyllysine modification. Serine 413 is subject to Phosphoserine. An N6-acetyllysine mark is found at lysine 419, lysine 435, and lysine 495.

Belongs to the aldehyde dehydrogenase family. As to quaternary structure, homotetramer. Interacts with PRMT3; the interaction is direct, inhibits ALDH1A1 aldehyde dehydrogenase activity and is independent of the methyltransferase activity of PRMT3. In terms of processing, the N-terminus is blocked most probably by acetylation.

The protein localises to the cytoplasm. It localises to the cytosol. It is found in the cell projection. The protein resides in the axon. The catalysed reaction is an aldehyde + NAD(+) + H2O = a carboxylate + NADH + 2 H(+). It carries out the reaction all-trans-retinal + NAD(+) + H2O = all-trans-retinoate + NADH + 2 H(+). The enzyme catalyses 9-cis-retinal + NAD(+) + H2O = 9-cis-retinoate + NADH + 2 H(+). It catalyses the reaction 11-cis-retinal + NAD(+) + H2O = 11-cis-retinoate + NADH + 2 H(+). The catalysed reaction is 13-cis-retinal + NAD(+) + H2O = 13-cis-retinoate + NADH + 2 H(+). It carries out the reaction 3-deoxyglucosone + NAD(+) + H2O = 2-dehydro-3-deoxy-D-gluconate + NADH + 2 H(+). The enzyme catalyses (E)-4-hydroxynon-2-enal + NAD(+) + H2O = (E)-4-hydroxynon-2-enoate + NADH + 2 H(+). It catalyses the reaction malonaldehyde + NAD(+) + H2O = 3-oxopropanoate + NADH + 2 H(+). The catalysed reaction is hexanal + NAD(+) + H2O = hexanoate + NADH + 2 H(+). It carries out the reaction propanal + NAD(+) + H2O = propanoate + NADH + 2 H(+). The enzyme catalyses acetaldehyde + NAD(+) + H2O = acetate + NADH + 2 H(+). It catalyses the reaction benzaldehyde + NAD(+) + H2O = benzoate + NADH + 2 H(+). The catalysed reaction is 4-aminobutanal + NAD(+) + H2O = 4-aminobutanoate + NADH + 2 H(+). It functions in the pathway cofactor metabolism; retinol metabolism. In terms of biological role, cytosolic dehydrogenase that catalyzes the irreversible oxidation of a wide range of aldehydes to their corresponding carboxylic acid. Functions downstream of retinol dehydrogenases and catalyzes the oxidation of retinaldehyde into retinoic acid, the second step in the oxidation of retinol/vitamin A into retinoic acid. This pathway is crucial to control the levels of retinol and retinoic acid, two important molecules which excess can be teratogenic and cytotoxic. Also oxidizes aldehydes resulting from lipid peroxidation like (E)-4-hydroxynon-2-enal/HNE, malonaldehyde and hexanal that form protein adducts and are highly cytotoxic. By participating for instance to the clearance of (E)-4-hydroxynon-2-enal/HNE in the lens epithelium prevents the formation of HNE-protein adducts and lens opacification. Also functions downstream of fructosamine-3-kinase in the fructosamine degradation pathway by catalyzing the oxidation of 3-deoxyglucosone, the carbohydrate product of fructosamine 3-phosphate decomposition, which is itself a potent glycating agent that may react with lysine and arginine side-chains of proteins. Also has an aminobutyraldehyde dehydrogenase activity and is probably part of an alternative pathway for the biosynthesis of GABA/4-aminobutanoate in midbrain, thereby playing a role in GABAergic synaptic transmission. The chain is Aldehyde dehydrogenase 1A1 from Mesocricetus auratus (Golden hamster).